Reading from the N-terminus, the 236-residue chain is Growth-regulating factor 12 (236 aa).

Residues 1-27 (MLAEGRQVYLPPPPPSKLPRLSGTDPT) are disordered. The 36-residue stretch at 74–109 (ALTFMQRQELEQQVLIYRYFAAGAPVPVHLVLPIWK) folds into the QLQ domain. Residues 140–184 (EPEPGRCRRTDGKKWRCSRDVVPGHKYCERHVHRGRGRSRKPMEA) form the WRC domain. 2 consecutive short sequence motifs (bipartite nuclear localization signal) follow at residues 145–155 (RCRRTDGKKWR) and 173–180 (RGRGRSRK).

It belongs to the GRF family.

The protein localises to the nucleus. Transcription activator that plays a regulatory role in gibberellin-induced stem elongation. The protein is Growth-regulating factor 12 (GRF12) of Oryza sativa subsp. japonica (Rice).